We begin with the raw amino-acid sequence, 422 residues long: Phospho-N-acetylmuramoyl-pentapeptide-transferase (422 aa).

Transmembrane regions (helical) follow at residues 28–48 (LMAI…FINL), 71–91 (VGVP…PCLL), 95–115 (LHNI…TLGF), 136–156 (IIGQ…SPSV), 208–228 (AQAV…TAVS), 239–259 (GMAA…AYVS), 279–299 (LVIF…YNAF), 313–333 (IGGI…IPIL), and 399–419 (KITV…IITL).

The protein belongs to the glycosyltransferase 4 family. MraY subfamily. Requires Mg(2+) as cofactor.

Its subcellular location is the cell inner membrane. It carries out the reaction UDP-N-acetyl-alpha-D-muramoyl-L-alanyl-gamma-D-glutamyl-meso-2,6-diaminopimeloyl-D-alanyl-D-alanine + di-trans,octa-cis-undecaprenyl phosphate = di-trans,octa-cis-undecaprenyl diphospho-N-acetyl-alpha-D-muramoyl-L-alanyl-D-glutamyl-meso-2,6-diaminopimeloyl-D-alanyl-D-alanine + UMP. The protein operates within cell wall biogenesis; peptidoglycan biosynthesis. Its function is as follows. Catalyzes the initial step of the lipid cycle reactions in the biosynthesis of the cell wall peptidoglycan: transfers peptidoglycan precursor phospho-MurNAc-pentapeptide from UDP-MurNAc-pentapeptide onto the lipid carrier undecaprenyl phosphate, yielding undecaprenyl-pyrophosphoryl-MurNAc-pentapeptide, known as lipid I. This chain is Phospho-N-acetylmuramoyl-pentapeptide-transferase, found in Phocaeicola vulgatus (strain ATCC 8482 / DSM 1447 / JCM 5826 / CCUG 4940 / NBRC 14291 / NCTC 11154) (Bacteroides vulgatus).